A 2159-amino-acid polypeptide reads, in one-letter code: Calpain-type cysteine protease DEK1 (2159 aa).

The first 33 residues, 1 to 33 (MEGEGHHGVVLACSICGFLFAVLSPFSFWVLWA), serve as a signal peptide directing secretion. Topologically, residues 34–70 (VNWRPWRLYSWIYARKWPTYVQGPQLSTLCSLLTLCA) are extracellular. The helical transmembrane segment at 71 to 91 (WLVVISPIAVLLVWGSVLIAL) threads the bilayer. Residues 92 to 95 (MERN) lie on the Cytoplasmic side of the membrane. The chain crosses the membrane as a helical span at residues 96–116 (IIGLAVIMAGVALLLSFYSIM). Topologically, residues 117-127 (LWWRTQWQSSE) are extracellular. The helical transmembrane segment at 128 to 148 (AVAYLLLLAVCLLCAYDFCAI) threads the bilayer. Over 149–164 (YVTAGASASELNSPSG) the chain is Cytoplasmic. The helical transmembrane segment at 165–185 (FFFGVSVISLAINMLFICKIL) threads the bilayer. Topologically, residues 186-236 (FNVSGFDVDEYVRRSYKFAYSDCVEVAPVSCSPEPPDPSELYMTKSSRVKH) are extracellular. The helical transmembrane segment at 237 to 257 (LGLLYISSLLVLVGYSILYGL) threads the bilayer. At 258 to 264 (TSKEARW) the chain is on the cytoplasmic side. The chain crosses the membrane as a helical span at residues 265-285 (LGALTSVAVVILDWNLGLCSF). Over 286-294 (RFELLKSRM) the chain is Extracellular. A helical membrane pass occupies residues 295-315 (IVLFVAGTSRAFLVSFGVHYW). Residues 316–320 (YLGHC) lie on the Cytoplasmic side of the membrane. A helical membrane pass occupies residues 321-341 (ISYAFVASVLLSAAVSSWLSI). Residues 342-623 (SNPSVARIDA…LIFHHLAGSP (282 aa)) lie on the Extracellular side of the membrane. The interval 365 to 409 (RKGQNSSSNSSEGCGSSVKRSSGSVEAGQNGNAMDSMYRSNSQSD) is disordered. The span at 369-381 (NSSSNSSEGCGSS) shows a compositional bias: low complexity. The span at 382–409 (VKRSSGSVEAGQNGNAMDSMYRSNSQSD) shows a compositional bias: polar residues. The helical transmembrane segment at 624-644 (IRAFIVFTVMFIIETATVAIY) threads the bilayer. At 645–660 (RPETIKVINATHEQFE) the chain is on the cytoplasmic side. A helical transmembrane segment spans residues 661–681 (FGFSILLLSPVVCSIMAFIWS). At 682 to 694 (LRAEEMLMTSKPQ) the chain is on the extracellular side. Residues 695-715 (KYGFIAWLLSTCVGLFLSFLS) traverse the membrane as a helical segment. At 716–719 (KSSV) the chain is on the cytoplasmic side. The chain crosses the membrane as a helical span at residues 720-740 (ILGLSLTVPLMVACLSFAVPI). The Extracellular portion of the chain corresponds to 741-770 (WIRNGYSFWIPGREFANRENVSQAPGEKER). A helical membrane pass occupies residues 771–791 (ALFVITIAVFTASIIGLGAIV). Topologically, residues 792 to 822 (SAKPLDALGYKGWDADKNSSYSPYATSMYLG) are cytoplasmic. A helical membrane pass occupies residues 823–843 (WALSSTIAVITTGLIPIVAWF). Over 844–853 (ATYRFSPSSA) the chain is Extracellular. The helical transmembrane segment at 854–874 (ICVGLFATVLVSFCGASYWGV) threads the bilayer. Residues 875-887 (VNSREDGVPLKAD) are Cytoplasmic-facing. The chain crosses the membrane as a helical span at residues 888–908 (FLAALLPLLCIPAFFSLFTGL). The Extracellular portion of the chain corresponds to 909-921 (YKWKDDDWKISRG). The chain crosses the membrane as a helical span at residues 922–942 (VYLFVGMGMLLLFGAVAAVIV). Over 943 to 946 (TIRP) the chain is Cytoplasmic. A helical transmembrane segment spans residues 947 to 967 (WTVGVACLVAILFLVFVIGVI). Over 968-981 (HYWTSNNFYLTRTQ) the chain is Extracellular. Residues 982–1002 (MLLVCSIAFLLALAAFLMGLF) traverse the membrane as a helical segment. Residues 1003–1016 (HGKPFVGASIGYFS) lie on the Cytoplasmic side of the membrane. A helical membrane pass occupies residues 1017–1037 (FIFLLTGRALTVLLSPPIVVY). The Extracellular segment spans residues 1038–1060 (SPRVLPVYVYDAHADSAKNVSYA). A helical transmembrane segment spans residues 1061 to 1081 (FLILYGIALATEVWGVIASLI). The Cytoplasmic segment spans residues 1082 to 2159 (MNPPFVGAGV…SKASIRLEAV (1078 aa)). Phosphoserine is present on residues Ser-1371 and Ser-1376. The 193-residue stretch at 1417 to 1609 (TGRHCGELDL…MSPAEYGFFD (193 aa)) folds into the Calpain catalytic 1 domain. A Phosphoserine modification is found at Ser-1665. In terms of domain architecture, Calpain catalytic 2 spans 1703-2005 (NFTDQEFPPE…FRSIYVCRVY (303 aa)). Residues Cys-1769, His-1927, and Asn-1947 contribute to the active site.

Belongs to the peptidase C2 family. Post-translationally, autocatalytic proteolytic cleavage leading to the production of mainly cytoplasmic localized subproducts of about 85 and 120 kDa. As to expression, expressed in most tissues at low levels ranging from 30 to 55 ppm. Present in all endosperm cells at transcript level, but confined to aleurones at protein level.

It localises to the endoplasmic reticulum membrane. It is found in the cytoplasm. The protein resides in the cell membrane. The protein localises to the endosome membrane. Functionally, essential protease involved in epiderm development. Required for aleurone cell development in the endosperm probably by maintaining and restricting the aleurone and embryonic epidermal L1 cell-layer fates as well as meristems organization. Involved in the maintenance of adaxial/abaxial axis information in developing leaves, probably by regulating cell proliferation and expansion. Does not need calcium ions to be active. The polypeptide is Calpain-type cysteine protease DEK1 (DEK1) (Zea mays (Maize)).